We begin with the raw amino-acid sequence, 557 residues long: Potassium-transporting ATPase potassium-binding subunit (557 aa).

Transmembrane regions (helical) follow at residues 5 to 25 (GFLLIATFLLVLMVLARPLGS), 63 to 83 (LCAILGLNMLGLAVLFFMLLG), 132 to 152 (GLTVQNFLSAASGIAVIFALI), 170 to 190 (LLRITLWVLVPVALLIALFFI), 253 to 273 (FVQMLAIFLIPTALCFAFGEV), 283 to 303 (LLWAMSVIFVICVGVVMWAEV), 329 to 349 (VLVSSLFAVVTTAASCGAVIA), 356 to 376 (ALGGMVPMWLMQIGEVVFGGV), 379 to 399 (GLYGMMLFVLLAVFIAGLMIG), 416 to 436 (LTALAILVTPTLVLMGAALAM), 484 to 504 (LLAFCMFVGRFGVIIPVMAIA), and 526 to 546 (LFVGLLIGTVLLVGALTFIPA).

Belongs to the KdpA family. As to quaternary structure, the system is composed of three essential subunits: KdpA, KdpB and KdpC.

It is found in the cell inner membrane. Part of the high-affinity ATP-driven potassium transport (or Kdp) system, which catalyzes the hydrolysis of ATP coupled with the electrogenic transport of potassium into the cytoplasm. This subunit binds the periplasmic potassium ions and delivers the ions to the membrane domain of KdpB through an intramembrane tunnel. The chain is Potassium-transporting ATPase potassium-binding subunit from Escherichia coli O9:H4 (strain HS).